Here is an 86-residue protein sequence, read N- to C-terminus: HssA/B-like protein 60 (86 aa).

The tract at residues 11-33 (GNIKSSSKSNIASSSSSSSSQSL) is disordered.

Belongs to the hssA/B family.

The protein is HssA/B-like protein 60 (hssl60) of Dictyostelium discoideum (Social amoeba).